The chain runs to 261 residues: Imidazole glycerol phosphate synthase subunit HisF (261 aa).

Residues Asp11 and Asp130 contribute to the active site.

It belongs to the HisA/HisF family. In terms of assembly, heterodimer of HisH and HisF.

It is found in the cytoplasm. The enzyme catalyses 5-[(5-phospho-1-deoxy-D-ribulos-1-ylimino)methylamino]-1-(5-phospho-beta-D-ribosyl)imidazole-4-carboxamide + L-glutamine = D-erythro-1-(imidazol-4-yl)glycerol 3-phosphate + 5-amino-1-(5-phospho-beta-D-ribosyl)imidazole-4-carboxamide + L-glutamate + H(+). It participates in amino-acid biosynthesis; L-histidine biosynthesis; L-histidine from 5-phospho-alpha-D-ribose 1-diphosphate: step 5/9. Functionally, IGPS catalyzes the conversion of PRFAR and glutamine to IGP, AICAR and glutamate. The HisF subunit catalyzes the cyclization activity that produces IGP and AICAR from PRFAR using the ammonia provided by the HisH subunit. This Heliobacterium modesticaldum (strain ATCC 51547 / Ice1) protein is Imidazole glycerol phosphate synthase subunit HisF.